A 152-amino-acid chain; its full sequence is Interleukin-2 (152 aa).

The first 20 residues, 1 to 20 (MYRMQLLSCIALTLALVANG), serve as a signal peptide directing secretion. Residue threonine 23 is glycosylated (O-linked (GalNAc...) threonine). The cysteines at positions 78 and 126 are disulfide-linked.

Belongs to the IL-2 family.

Its subcellular location is the secreted. In terms of biological role, cytokine produced by activated CD4-positive helper T-cells and to a lesser extend activated CD8-positive T-cells and natural killer (NK) cells that plays pivotal roles in the immune response and tolerance. Binds to a receptor complex composed of either the high-affinity trimeric IL-2R (IL2RA/CD25, IL2RB/CD122 and IL2RG/CD132) or the low-affinity dimeric IL-2R (IL2RB and IL2RG). Interaction with the receptor leads to oligomerization and conformation changes in the IL-2R subunits resulting in downstream signaling starting with phosphorylation of JAK1 and JAK3. In turn, JAK1 and JAK3 phosphorylate the receptor to form a docking site leading to the phosphorylation of several substrates including STAT5. This process leads to activation of several pathways including STAT, phosphoinositide-3-kinase/PI3K and mitogen-activated protein kinase/MAPK pathways. Functions as a T-cell growth factor and can increase NK-cell cytolytic activity as well. Promotes strong proliferation of activated B-cells and subsequently immunoglobulin production. Plays a pivotal role in regulating the adaptive immune system by controlling the survival and proliferation of regulatory T-cells, which are required for the maintenance of immune tolerance. Moreover, participates in the differentiation and homeostasis of effector T-cell subsets, including Th1, Th2, Th17 as well as memory CD8-positive T-cells. The sequence is that of Interleukin-2 (IL2) from Orcinus orca (Killer whale).